The primary structure comprises 372 residues: Probable NADH-dependent flavin oxidoreductase YqiG (372 aa).

This sequence belongs to the NADH:flavin oxidoreductase/NADH oxidase family.

The polypeptide is Probable NADH-dependent flavin oxidoreductase YqiG (yqiG) (Bacillus subtilis (strain 168)).